The sequence spans 322 residues: Cysteine synthase (322 aa).

Asparagine 8 and arginine 35 together coordinate hydrogen sulfide. The residue at position 42 (lysine 42) is an N6-(pyridoxal phosphate)lysine. Residues asparagine 72 and 177–181 contribute to the pyridoxal 5'-phosphate site; that span reads GTGGT. Leucine 269 provides a ligand contact to hydrogen sulfide. Serine 273 is a binding site for pyridoxal 5'-phosphate.

The protein belongs to the cysteine synthase/cystathionine beta-synthase family. As to quaternary structure, homodimer. It depends on pyridoxal 5'-phosphate as a cofactor.

It catalyses the reaction O-acetyl-L-serine + hydrogen sulfide = L-cysteine + acetate. The protein operates within amino-acid biosynthesis; L-cysteine biosynthesis; L-cysteine from L-serine: step 2/2. The chain is Cysteine synthase (cysK) from Buchnera aphidicola subsp. Schizaphis graminum (strain Sg).